The chain runs to 533 residues: Flavin-dependent halogenase gsfI (533 aa).

FAD-binding residues include Gly-14, Gly-17, and Glu-47. Residues Ser-331 and Gly-332 each contribute to the chloride site.

It belongs to the flavin-dependent halogenase family.

The enzyme catalyses griseophenone C + FADH2 + chloride + O2 = griseophenone B + FAD + 2 H2O + H(+). Its pathway is secondary metabolite biosynthesis; terpenoid biosynthesis. Functionally, flavin-dependent halogenase; part of the gene cluster that mediates the biosynthesis of griseofulvin, an important antifungal drug that has been in use for a long time for treating dermatophyte infections. The first step of the pathway is the formation of the heptaketide backbone by gsfA which is initiated by priming with acetyl-CoA, followed by sequential condensations of 6 malonyl-CoA units. The resulting benzophenone can undergo a spontaneous dehydration to form norlichexanthone. However, the true precursor for the griseofulvin biosynthesis is not norlichexanthone, but the heptaketide benzophenone that is O-methylated at 3-OH by gsfB to produce griseophenone D which is further methylated at 9-OH by gsfC to yield griseophenone C. Griseophenone C is then substrate of halogenase gsfI which is responsible for the regio-specific chlorination at the C13 position to form griseophenone B. The cytochrome P450 gsfF catalyzes the coupling of orcinol and phloroglucinol rings in griseophenone B to form desmethyl-dehydrogriseofulvin A which is further methylated at 5-OH by gsfD to yield dehydrogriseofulvin. Finally, gsfE performs stereospecific reduction of enone 18 of dehydrogriseofulvin to afford the final product griseofulvin. The polypeptide is Flavin-dependent halogenase gsfI (Penicillium aethiopicum).